The sequence spans 395 residues: Elongation factor Tu (395 aa).

In terms of domain architecture, tr-type G spans 10–204; sequence KPHVNIGTIG…TVDEYIPTPQ (195 aa). The segment at 19 to 26 is G1; it reads GHVDHGKT. GTP is bound at residue 19 to 26; that stretch reads GHVDHGKT. Position 26 (Thr-26) interacts with Mg(2+). Residues 60-64 are G2; it reads GITIN. Positions 81-84 are G3; sequence DAPG. Residues 81-85 and 136-139 contribute to the GTP site; these read DAPGH and NKCD. Residues 136 to 139 are G4; the sequence is NKCD. The G5 stretch occupies residues 174–176; that stretch reads SAL.

This sequence belongs to the TRAFAC class translation factor GTPase superfamily. Classic translation factor GTPase family. EF-Tu/EF-1A subfamily. In terms of assembly, monomer.

It localises to the cytoplasm. It carries out the reaction GTP + H2O = GDP + phosphate + H(+). GTP hydrolase that promotes the GTP-dependent binding of aminoacyl-tRNA to the A-site of ribosomes during protein biosynthesis. The sequence is that of Elongation factor Tu from Ligilactobacillus salivarius (strain UCC118) (Lactobacillus salivarius).